The following is a 345-amino-acid chain: RING finger protein 228 (345 aa).

Low complexity predominate over residues 1 to 21 (MAAPASDSGGSQQSPSSSPGS). Positions 1 to 43 (MAAPASDSGGSQQSPSSSPGSREGAGVAAKGAPDCGDAGARDA) are disordered. Residues 58–125 (CKICYNYFDA…PGAIACPVCR (68 aa)) form an RING-type zinc finger. Positions 159-213 (LPQDRLPPLPARLPAPAAAPPPTPAPPPPPSPAPPQPPPPPPAEDAAPGPRARPG) are disordered. Positions 163–201 (RLPPLPARLPAPAAAPPPTPAPPPPPSPAPPQPPPPPPA) are enriched in pro residues. Residues 202–213 (EDAAPGPRARPG) are compositionally biased toward low complexity. 2 consecutive transmembrane segments (helical) span residues 236–256 (VCVVFSFLSMVVLLFTGLIFV) and 290–310 (LSVASILALFSVVVTWVICWL). A disordered region spans residues 319–345 (AGSTGGSGGGGGPRARAAAGGARRSDT). Gly residues predominate over residues 321–331 (STGGSGGGGGP). Over residues 332–345 (RARAAAGGARRSDT) the composition is skewed to low complexity.

It is found in the membrane. The protein is RING finger protein 228 of Homo sapiens (Human).